Reading from the N-terminus, the 291-residue chain is Small ribosomal subunit protein uS2 (291 aa).

The disordered stretch occupies residues 270–291 (NINEEANTEFEQALSDADEDKN).

This sequence belongs to the universal ribosomal protein uS2 family.

The polypeptide is Small ribosomal subunit protein uS2 (Rickettsia bellii (strain OSU 85-389)).